We begin with the raw amino-acid sequence, 166 residues long: CDP-archaeol synthase (166 aa).

Transmembrane regions (helical) follow at residues 7 to 27, 55 to 75, 78 to 98, 116 to 136, and 138 to 158; these read LLLSILIYLPAFVANGSGPFI, LIVALTFGTTVGVIISKFFTA, TLISFLESLFAMIGDMIGAFI, LDFVLGASLILVLMRVNITWY, and FLFICGLAFFLHQGTNYVAYL.

The protein belongs to the CDP-archaeol synthase family. Requires Mg(2+) as cofactor.

It localises to the cell membrane. It catalyses the reaction 2,3-bis-O-(geranylgeranyl)-sn-glycerol 1-phosphate + CTP + H(+) = CDP-2,3-bis-O-(geranylgeranyl)-sn-glycerol + diphosphate. It participates in membrane lipid metabolism; glycerophospholipid metabolism. In terms of biological role, catalyzes the formation of CDP-2,3-bis-(O-geranylgeranyl)-sn-glycerol (CDP-archaeol) from 2,3-bis-(O-geranylgeranyl)-sn-glycerol 1-phosphate (DGGGP) and CTP. This reaction is the third ether-bond-formation step in the biosynthesis of archaeal membrane lipids. This is CDP-archaeol synthase from Saccharolobus islandicus (strain L.S.2.15 / Lassen #1) (Sulfolobus islandicus).